The sequence spans 345 residues: Phenylalanine--tRNA ligase alpha subunit (345 aa).

Mg(2+) is bound at residue Glu253.

The protein belongs to the class-II aminoacyl-tRNA synthetase family. Phe-tRNA synthetase alpha subunit type 1 subfamily. As to quaternary structure, tetramer of two alpha and two beta subunits. Mg(2+) is required as a cofactor.

It localises to the cytoplasm. The catalysed reaction is tRNA(Phe) + L-phenylalanine + ATP = L-phenylalanyl-tRNA(Phe) + AMP + diphosphate + H(+). The protein is Phenylalanine--tRNA ligase alpha subunit of Lawsonia intracellularis (strain PHE/MN1-00).